Reading from the N-terminus, the 156-residue chain is Small ribosomal subunit protein uS7 (156 aa).

This sequence belongs to the universal ribosomal protein uS7 family. In terms of assembly, part of the 30S ribosomal subunit. Contacts proteins S9 and S11.

Functionally, one of the primary rRNA binding proteins, it binds directly to 16S rRNA where it nucleates assembly of the head domain of the 30S subunit. Is located at the subunit interface close to the decoding center, probably blocks exit of the E-site tRNA. In Rhodococcus opacus (strain B4), this protein is Small ribosomal subunit protein uS7.